The sequence spans 111 residues: Cell division protein FtsB (111 aa).

Topologically, residues 1–3 (MRL) are cytoplasmic. The chain crosses the membrane as a helical span at residues 4 to 21 (LFLVLLVLLGLIQYPLWL). Over 22 to 111 (GKGGWFKVWD…PGQTASAPRR (90 aa)) the chain is Periplasmic. The stretch at 31–62 (DLQRQVAAQHETNDGLRARNAALEAEVRDLAT) forms a coiled coil. The interval 88-111 (VPPGTPVPQPAPGAPGQTASAPRR) is disordered. A compositionally biased stretch (pro residues) spans 90–100 (PGTPVPQPAPG). Low complexity predominate over residues 101 to 111 (APGQTASAPRR).

This sequence belongs to the FtsB family. Part of a complex composed of FtsB, FtsL and FtsQ.

Its subcellular location is the cell inner membrane. Its function is as follows. Essential cell division protein. May link together the upstream cell division proteins, which are predominantly cytoplasmic, with the downstream cell division proteins, which are predominantly periplasmic. This Bordetella petrii (strain ATCC BAA-461 / DSM 12804 / CCUG 43448) protein is Cell division protein FtsB.